The following is a 342-amino-acid chain: (Lyso)-N-acylphosphatidylethanolamine lipase (342 aa).

The region spanning 70–324 (PLVMVHGFGG…IEGASHHVYA (255 aa)) is the AB hydrolase-1 domain.

Belongs to the peptidase S33 family. ABHD4/ABHD5 subfamily.

The enzyme catalyses N-hexadecanoyl-1,2-di-(9Z-octadecenoyl)-sn-glycero-3-phosphoethanolamine + H2O = N-hexadecanoyl-1-(9Z-octadecenoyl)-sn-glycero-3-phosphoethanolamine + (9Z)-octadecenoate + H(+). It catalyses the reaction an N-acyl-1,2-diacyl-sn-glycero-3-phosphoethanolamine + H2O = N,1-diacyl-sn-glycero-3-phosphoethanolamine + a fatty acid + H(+). It carries out the reaction N-hexadecanoyl-1-(9Z-octadecenoyl)-sn-glycero-3-phosphoethanolamine + H2O = N-hexadecanoyl-sn-glycero-3-phosphoethanolamine + (9Z)-octadecenoate + H(+). The catalysed reaction is N-octadecanoyl-1-(9Z-octadecenoyl)-sn-glycero-3-phosphoethanolamine + H2O = N-octadecanoyl-sn-glycero-3-phospho-ethanolamine + (9Z)-octadecenoate + H(+). The enzyme catalyses N-eicosanoyl-1-(9Z-octadecenoyl)-sn-glycero-3-phosphoethanolamine + H2O = N-eicosanoyl-sn-glycero-3-phosphoethanolamine + (9Z)-octadecenoate + H(+). It catalyses the reaction N,1-di-(9Z-octadecenoyl)-sn-glycero-3-phosphoethanolamine + H2O = N-(9Z-octadecenoyl)-sn-glycero-3-phosphoethanolamine + (9Z)-octadecenoate + H(+). It carries out the reaction N-(5Z,8Z,11Z,14Z-eicosatetraenoyl)-1-(9Z-octadecenoyl)-sn-glycero-3-phosphoethanolamine + H2O = N-(5Z,8Z,11Z,14Z-eicosatetraenoyl)-sn-glycero-3-phosphoethanolamine + (9Z)-octadecenoate + H(+). The catalysed reaction is 1-octadecanoyl-2-(9Z-octadecenoyl)-sn-glycero-3-phospho-(N-hexadecanoyl)-serine + H2O = 1-octadecanoyl-2-hydroxy-sn-glycero-3-phospho-(N-hexadecanoyl)-serine + (9Z)-octadecenoate + H(+). The enzyme catalyses 1-O-(1Z-octadecenoyl)-2-(9Z-octadecenoyl)-sn-glycero-3-phospho-N-hexadecanoyl-ethanolamine + H2O = 1-O-(1Z-octadecenyl)-sn-glycero-3-phospho-N-hexadecanoyl-ethanolamine + (9Z)-octadecenoate + H(+). It catalyses the reaction N,1-diacyl-sn-glycero-3-phosphoethanolamine + H2O = N-acyl-sn-glycero-3-phosphoethanolamine + a fatty acid + H(+). Functionally, lysophospholipase selective for N-acyl phosphatidylethanolamine (NAPE). Contributes to the biosynthesis of N-acyl ethanolamines, including the endocannabinoid anandamide by hydrolyzing the sn-1 and sn-2 acyl chains from N-acyl phosphatidylethanolamine (NAPE) generating glycerophospho-N-acyl ethanolamine (GP-NAE), an intermediate for N-acyl ethanolamine biosynthesis. Hydrolyzes substrates bearing saturated, monounsaturated, polyunsaturated N-acyl chains. Shows no significant activity towards other lysophospholipids, including lysophosphatidylcholine, lysophosphatidylethanolamine and lysophosphatidylserine. The sequence is that of (Lyso)-N-acylphosphatidylethanolamine lipase from Bos taurus (Bovine).